A 278-amino-acid polypeptide reads, in one-letter code: Large ribosomal subunit protein uL2 (278 aa).

Disordered regions lie at residues 1–20 and 225–278; these read MGIR…SVSD and VMNP…GKKR. The span at 258-278 shows a compositional bias: basic residues; sequence RNKKKASSRLIVRRRKSGKKR.

The protein belongs to the universal ribosomal protein uL2 family. In terms of assembly, part of the 50S ribosomal subunit. Forms a bridge to the 30S subunit in the 70S ribosome.

Its function is as follows. One of the primary rRNA binding proteins. Required for association of the 30S and 50S subunits to form the 70S ribosome, for tRNA binding and peptide bond formation. It has been suggested to have peptidyltransferase activity; this is somewhat controversial. Makes several contacts with the 16S rRNA in the 70S ribosome. The chain is Large ribosomal subunit protein uL2 from Cutibacterium acnes (strain DSM 16379 / KPA171202) (Propionibacterium acnes).